Consider the following 1061-residue polypeptide: Ceruloplasmin (1061 aa).

A signal peptide spans 1-19 (MKFLLLSTFIFLYSSLALA). Plastocyanin-like domains follow at residues 20 to 199 (RDKH…LILC), 208 to 356 (KEKN…VRDC), 369 to 555 (HVRH…MKIC), 565 to 713 (RQKD…VNQC), 725 to 895 (GERT…LIVC), and 903 to 1057 (FSPK…VEQE). Positions 55, 64, and 67 each coordinate Na(+). Residues H120 and H122 each coordinate Cu(2+). H120 is a binding site for O2. Ca(2+) is bound at residue K128. N138 carries N-linked (GlcNAc...) asparagine glycosylation. Ca(2+)-binding residues include Q143, D146, and D147. An intrachain disulfide couples C173 to C199. Cu(2+) contacts are provided by H179 and H181. H179 is a binding site for O2. N-linked (GlcNAc...) asparagine glycosylation is present at N226. S255 provides a ligand contact to Na(+). A disulfide bond links C275 and C356. The Cu(2+) site is built by H294, C337, and H342. Residue N396 is glycosylated (N-linked (GlcNAc...) asparagine). The Na(+) site is built by F407, G416, and Y419. A disulfide bridge connects residues C529 and C555. An N-linked (GlcNAc...) asparagine glycan is attached at N583. S612 serves as a coordination point for Na(+). A disulfide bond links C632 and C713. Cu(2+)-binding residues include H651, C694, H699, and M704. C694 acts as the Nucleophile; for glutathione peroxidase activity in catalysis. N757 carries N-linked (GlcNAc...) asparagine glycosylation. 3 residues coordinate Na(+): F762, G771, and Y774. An intrachain disulfide couples C869 to C895. N921 carries N-linked (GlcNAc...) asparagine glycosylation. S950 is a binding site for Na(+). Residues H989, H992, H994, H1034, C1035, H1036, H1040, and M1045 each contribute to the Cu(2+) site. O2 is bound by residues H992 and H994. An O2-binding site is contributed by H1036.

It belongs to the multicopper oxidase family. As to quaternary structure, found in a complex with MPO and LTF; interacts directly with MPO and LTF, which allows Fe(3+) incorporation into LTF, activation of CP ferroxidase activity and protection of CP antioxidant properties by MPO. Requires Cu(2+) as cofactor. As to expression, expressed in many tissues, including liver, eye and brain.

Its subcellular location is the secreted. The catalysed reaction is 4 Fe(2+) + O2 + 4 H(+) = 4 Fe(3+) + 2 H2O. It catalyses the reaction 4 Cu(+) + O2 + 4 H(+) = 4 Cu(2+) + 2 H2O. The enzyme catalyses a hydroperoxide + 2 glutathione = an alcohol + glutathione disulfide + H2O. It carries out the reaction 4 nitric oxide + O2 + 2 H2O = 4 nitrite + 4 H(+). The catalysed reaction is 2 glutathione + H2O2 = glutathione disulfide + 2 H2O. Multifunctional blue, copper-binding (6-7 atoms per molecule) glycoprotein. It has ferroxidase activity oxidizing Fe(2+) to Fe(3+) without releasing radical oxygen species. It is involved in iron transport across the cell membrane. Copper ions provide a large number of enzymatic activites. Oxidizes highly toxic ferrous ions to the ferric state for further incorporation onto apo-transferrins, catalyzes Cu(+) oxidation and promotes the oxidation of biogenic amines such as norepinephrin and serotonin. Provides Cu(2+) ions for the ascorbate-mediated deaminase degradation of the heparan sulfate chains of GPC1. Has glutathione peroxidase-like activity, can remove both hydrogen peroxide and lipid hydroperoxide in the presence of thiols. Also shows NO-oxidase and NO2 synthase activities that determine endocrine NO homeostasis. The chain is Ceruloplasmin (Cp) from Mus musculus (Mouse).